A 620-amino-acid chain; its full sequence is 1-deoxy-D-xylulose-5-phosphate synthase (620 aa).

Thiamine diphosphate contacts are provided by residues H75 and 116-118; that span reads AHS. D147 is a binding site for Mg(2+). Thiamine diphosphate contacts are provided by residues 148–149, N177, Y284, and E366; that span reads GA. N177 is a binding site for Mg(2+).

It belongs to the transketolase family. DXPS subfamily. In terms of assembly, homodimer. The cofactor is Mg(2+). It depends on thiamine diphosphate as a cofactor.

The catalysed reaction is D-glyceraldehyde 3-phosphate + pyruvate + H(+) = 1-deoxy-D-xylulose 5-phosphate + CO2. It participates in metabolic intermediate biosynthesis; 1-deoxy-D-xylulose 5-phosphate biosynthesis; 1-deoxy-D-xylulose 5-phosphate from D-glyceraldehyde 3-phosphate and pyruvate: step 1/1. Its function is as follows. Catalyzes the acyloin condensation reaction between C atoms 2 and 3 of pyruvate and glyceraldehyde 3-phosphate to yield 1-deoxy-D-xylulose-5-phosphate (DXP). The chain is 1-deoxy-D-xylulose-5-phosphate synthase from Bordetella avium (strain 197N).